The chain runs to 236 residues: Small ribosomal subunit protein uS2 (236 aa).

The protein belongs to the universal ribosomal protein uS2 family.

This chain is Small ribosomal subunit protein uS2, found in Brevibacillus brevis (strain 47 / JCM 6285 / NBRC 100599).